The primary structure comprises 231 residues: Probable GTP-binding protein EngB (231 aa).

The 181-residue stretch at 51-231 (DLSEIAFAGR…RAQLAALASP (181 aa)) folds into the EngB-type G domain. GTP-binding positions include 59 to 66 (GRSNVGKS), 86 to 90 (GRTQE), 109 to 112 (DLPG), 176 to 179 (TKAD), and 210 to 212 (TSS). Serine 66 and threonine 88 together coordinate Mg(2+).

The protein belongs to the TRAFAC class TrmE-Era-EngA-EngB-Septin-like GTPase superfamily. EngB GTPase family. It depends on Mg(2+) as a cofactor.

Its function is as follows. Necessary for normal cell division and for the maintenance of normal septation. The polypeptide is Probable GTP-binding protein EngB (Rhodospirillum rubrum (strain ATCC 11170 / ATH 1.1.1 / DSM 467 / LMG 4362 / NCIMB 8255 / S1)).